Reading from the N-terminus, the 267-residue chain is Hydroxyethylthiazole kinase 2 (267 aa).

Residue methionine 41 coordinates substrate. ATP-binding residues include lysine 116 and threonine 166. Glycine 193 serves as a coordination point for substrate.

Belongs to the Thz kinase family. Requires Mg(2+) as cofactor.

The catalysed reaction is 5-(2-hydroxyethyl)-4-methylthiazole + ATP = 4-methyl-5-(2-phosphooxyethyl)-thiazole + ADP + H(+). It participates in cofactor biosynthesis; thiamine diphosphate biosynthesis; 4-methyl-5-(2-phosphoethyl)-thiazole from 5-(2-hydroxyethyl)-4-methylthiazole: step 1/1. In terms of biological role, catalyzes the phosphorylation of the hydroxyl group of 4-methyl-5-beta-hydroxyethylthiazole (THZ). The chain is Hydroxyethylthiazole kinase 2 from Streptococcus pneumoniae (strain Hungary19A-6).